We begin with the raw amino-acid sequence, 613 residues long: Dihydroxy-acid dehydratase (613 aa).

Aspartate 81 is a binding site for Mg(2+). Cysteine 122 is a binding site for [2Fe-2S] cluster. Mg(2+)-binding residues include aspartate 123 and lysine 124. N6-carboxylysine is present on lysine 124. A [2Fe-2S] cluster-binding site is contributed by cysteine 195. Glutamate 491 lines the Mg(2+) pocket. The active-site Proton acceptor is serine 517.

This sequence belongs to the IlvD/Edd family. In terms of assembly, homodimer. Requires [2Fe-2S] cluster as cofactor. Mg(2+) is required as a cofactor.

The enzyme catalyses (2R)-2,3-dihydroxy-3-methylbutanoate = 3-methyl-2-oxobutanoate + H2O. The catalysed reaction is (2R,3R)-2,3-dihydroxy-3-methylpentanoate = (S)-3-methyl-2-oxopentanoate + H2O. Its pathway is amino-acid biosynthesis; L-isoleucine biosynthesis; L-isoleucine from 2-oxobutanoate: step 3/4. It participates in amino-acid biosynthesis; L-valine biosynthesis; L-valine from pyruvate: step 3/4. Functionally, functions in the biosynthesis of branched-chain amino acids. Catalyzes the dehydration of (2R,3R)-2,3-dihydroxy-3-methylpentanoate (2,3-dihydroxy-3-methylvalerate) into 2-oxo-3-methylpentanoate (2-oxo-3-methylvalerate) and of (2R)-2,3-dihydroxy-3-methylbutanoate (2,3-dihydroxyisovalerate) into 2-oxo-3-methylbutanoate (2-oxoisovalerate), the penultimate precursor to L-isoleucine and L-valine, respectively. This Photobacterium profundum (strain SS9) protein is Dihydroxy-acid dehydratase.